We begin with the raw amino-acid sequence, 441 residues long: tRNA modification GTPase MnmE (441 aa).

The (6S)-5-formyl-5,6,7,8-tetrahydrofolate site is built by R24, E81, and K121. A TrmE-type G domain is found at 218–366 (GMVVAIAGPP…LLRELTRFAA (149 aa)). Residues 228-233 (NVGKST), 247-253 (SPHAGTT), and 272-275 (DTAG) each bind GTP. The Mg(2+) site is built by S232 and T253. Position 441 (K441) interacts with (6S)-5-formyl-5,6,7,8-tetrahydrofolate.

It belongs to the TRAFAC class TrmE-Era-EngA-EngB-Septin-like GTPase superfamily. TrmE GTPase family. Homodimer. Heterotetramer of two MnmE and two MnmG subunits. Requires K(+) as cofactor.

It localises to the cytoplasm. In terms of biological role, exhibits a very high intrinsic GTPase hydrolysis rate. Involved in the addition of a carboxymethylaminomethyl (cmnm) group at the wobble position (U34) of certain tRNAs, forming tRNA-cmnm(5)s(2)U34. This chain is tRNA modification GTPase MnmE, found in Rhodopseudomonas palustris (strain ATCC BAA-98 / CGA009).